The chain runs to 74 residues: Conotoxin Bu4 (74 aa).

An N-terminal signal peptide occupies residues 1–22 (MKLTCVVIVAVLLLTACQLIIA). Residues 23–45 (EDSRGTQLHRALRKATKLSVSTR) constitute a propeptide that is removed on maturation. Intrachain disulfides connect Cys47–Cys63, Cys54–Cys66, and Cys62–Cys73.

Belongs to the conotoxin O1 superfamily. Expressed by the venom duct.

It localises to the secreted. The chain is Conotoxin Bu4 from Conus bullatus (Bubble cone).